A 330-amino-acid chain; its full sequence is Malate dehydrogenase (330 aa).

13–19 (GAAGQIG) lines the NAD(+) pocket. Positions 94 and 100 each coordinate substrate. NAD(+) is bound by residues Asn-107, Gln-114, and 131–133 (VGN). Substrate is bound by residues Asn-133 and Arg-164. His-189 functions as the Proton acceptor in the catalytic mechanism.

The protein belongs to the LDH/MDH superfamily. MDH type 2 family.

The enzyme catalyses (S)-malate + NAD(+) = oxaloacetate + NADH + H(+). Functionally, catalyzes the reversible oxidation of malate to oxaloacetate. The sequence is that of Malate dehydrogenase from Deinococcus radiodurans (strain ATCC 13939 / DSM 20539 / JCM 16871 / CCUG 27074 / LMG 4051 / NBRC 15346 / NCIMB 9279 / VKM B-1422 / R1).